The sequence spans 190 residues: Guanylate kinase (190 aa).

The Guanylate kinase-like domain occupies 3-185 (NYIFIISAPS…SLEQLCKYFE (183 aa)). 10 to 17 (APSGAGKS) serves as a coordination point for ATP.

Belongs to the guanylate kinase family.

The protein localises to the cytoplasm. It catalyses the reaction GMP + ATP = GDP + ADP. Its function is as follows. Essential for recycling GMP and indirectly, cGMP. This is Guanylate kinase from Francisella tularensis subsp. holarctica (strain LVS).